The primary structure comprises 775 residues: Polyribonucleotide nucleotidyltransferase (775 aa).

Mg(2+) contacts are provided by Asp-487 and Asp-493. Positions 554–613 (PKVEVVDVPEEKAPLIIGPGGSTVKKIYDETGVKVWVGEQGKVYLFVFPGGDVEKAKQMI) constitute a KH domain. S1 motif domains are found at residues 623–693 (GAVY…IGIE) and 707–775 (GDVY…TDDV).

It belongs to the polyribonucleotide nucleotidyltransferase family. Requires Mg(2+) as cofactor.

It localises to the cytoplasm. It carries out the reaction RNA(n+1) + phosphate = RNA(n) + a ribonucleoside 5'-diphosphate. In terms of biological role, involved in mRNA degradation. Catalyzes the phosphorolysis of single-stranded polyribonucleotides processively in the 3'- to 5'-direction. The chain is Polyribonucleotide nucleotidyltransferase from Aquifex aeolicus (strain VF5).